The chain runs to 253 residues: 5-oxoprolinase subunit A (253 aa).

Belongs to the LamB/PxpA family. As to quaternary structure, forms a complex composed of PxpA, PxpB and PxpC.

The enzyme catalyses 5-oxo-L-proline + ATP + 2 H2O = L-glutamate + ADP + phosphate + H(+). Functionally, catalyzes the cleavage of 5-oxoproline to form L-glutamate coupled to the hydrolysis of ATP to ADP and inorganic phosphate. In Chloroflexus aurantiacus (strain ATCC 29364 / DSM 637 / Y-400-fl), this protein is 5-oxoprolinase subunit A.